A 468-amino-acid chain; its full sequence is 6-phosphogluconate dehydrogenase, NAD(+)-dependent, decarboxylating (468 aa).

NAD(+)-binding positions include 9 to 14, 32 to 34, 73 to 75, and N101; these read GLGVMG, NYT, and VTA. Residues N101 and 127–129 contribute to the substrate site; that span reads SGG. The active-site Proton acceptor is the K181. A substrate-binding site is contributed by 184 to 185; sequence HN. E188 (proton donor) is an active-site residue. Substrate is bound by residues Y189, K259, R286, R445, and H451.

The protein belongs to the 6-phosphogluconate dehydrogenase family. Homodimer.

The catalysed reaction is 6-phospho-D-gluconate + NAD(+) = D-ribulose 5-phosphate + CO2 + NADH. Catalyzes the oxidative decarboxylation of 6-phosphogluconate to ribulose 5-phosphate and CO(2), with concomitant reduction of NAD to NADH. Does not contribute to oxidative pentose phosphate (PP) pathway fluxes during growth on glucose. The functional role of GntZ remains obscure. This Bacillus subtilis (strain 168) protein is 6-phosphogluconate dehydrogenase, NAD(+)-dependent, decarboxylating (gntZ).